The primary structure comprises 139 residues: uncharacterized protein (139 aa).

This is an uncharacterized protein from Encephalitozoon cuniculi (strain GB-M1) (Microsporidian parasite).